Consider the following 964-residue polypeptide: MLWQRLAVVEWAALAWELLGASVLFIAVRWLVRRLEKRPRDLNRCGTLSSPPSASEAVAAQPGEVTMDAMMARLKLLNPDDLRKEVMKAGLKCGPITSTTRFIFEKKLAQALLEQGGLLTSSLPKPSAVTAMAFIQGTSRTPPSVDGKQTQQACFSEDRDFGYSVGLNPPEEEAVASSVHPVPFSASTRNDNHKAGVTAPKEPLVYYGVCPVYEDGPVRHERIHVYEDKKEALQAAKLIKGSRFKAFRTREDAEKFARGICDYLPSPNKTTPLLSPVKAVPLGGSDGLKADGLCLAESETVNKERANSYKNPRTQDLTAKLRKAVENGEEHTFSDLIWSNPRYLIGSGDNPTIVQEGCRYNVMHVAAKENQASMCQLTLETLENPEFMRLMYPDDNMDMLQKRILYVVDLYLNTPDKVGFDTPLHFACKFGNVDVVNVLSSHPLIVKNRKNKYGKTPEEVICERSQNKSPALKERIREYLMGHYYVPLLRAEDTSPVIGELWSSDQKAEASNTAHCRSSPRDPVMTLRAFVGPLSPSKAEDFRKLWKTPPRKKAGFFHSIRKSDPERGIERVGRELAHELGYPWVEYWEFLGCFVDLSSQEGLQRLEEYLIQKELSKKAQQEIRENEGCLQDRTSDFGSGKKYSNSISVGAFLDGDDDSSLEEIKNQQNTVPSQSQPTTDKFQTSKSGSLPLGQKVDPGETSVGTYPDKGRNGFCHPLNHRTADGRGLEATNGEEALPPPVSVLTQELNKLNLQSLGDSLHETPDKNGKLEDEVLPSRKGAADSDLLASPPAIASLGKKQVRTNTEVSEAMAEMSLGPKSPQLGVQAGLEPILSSATVDSTKRLFLSGEEPSKLDRDVLAALECANIDPGLYPAIHRWKSTVMCYSPSDRQSWPSPALKGKFTTELVDLDCSHSCSGRCSPAGSSPSKPGHTSSSSGLHSPGRYSPAHGRHFQRVAHVARLAAL.

The Extracellular segment spans residues 1 to 7 (MLWQRLA). Residues 8-28 (VVEWAALAWELLGASVLFIAV) traverse the membrane as a helical; Signal-anchor for type III membrane protein segment. The Cytoplasmic segment spans residues 29-964 (RWLVRRLEKR…VAHVARLAAL (936 aa)). The 45-residue stretch at 71–115 (MARLKLLNPDDLRKEVMKAGLKCGPITSTTRFIFEKKLAQALLEQ) folds into the LEM domain. Phosphoserine is present on residues Ser-266 and Ser-275. One copy of the ANK repeat lies at 419 to 448 (GFDTPLHFACKFGNVDVVNVLSSHPLIVKN). 5 positions are modified to phosphoserine: Ser-503, Ser-519, Ser-535, Ser-675, and Ser-916. The span at 666–688 (NQQNTVPSQSQPTTDKFQTSKSG) shows a compositional bias: polar residues. Residues 666 to 726 (NQQNTVPSQS…PLNHRTADGR (61 aa)) form a disordered region. The segment at 920 to 949 (SPAGSSPSKPGHTSSSSGLHSPGRYSPAHG) is disordered. Residues 923–937 (GSSPSKPGHTSSSSG) show a composition bias toward low complexity. Ser-940 carries the phosphoserine modification.

Belongs to the ANKLE2 family. Interacts with BAF/BANF1. Interacts with protein phosphatase 2A (PP2A) components PPP2C (PPP2CA or PPP2CB) and PPP2R1A.

It localises to the endoplasmic reticulum membrane. Functionally, involved in mitotic nuclear envelope reassembly by promoting dephosphorylation of BAF/BANF1 during mitotic exit. Coordinates the control of BAF/BANF1 dephosphorylation by inhibiting VRK1 kinase and promoting dephosphorylation of BAF/BANF1 by protein phosphatase 2A (PP2A), thereby facilitating nuclear envelope assembly. May regulate nuclear localization of VRK1 in non-dividing cells. It is unclear whether it acts as a real PP2A regulatory subunit or whether it is involved in recruitment of the PP2A complex. Involved in brain development. This Mus musculus (Mouse) protein is Ankyrin repeat and LEM domain-containing protein 2 (Ankle2).